The sequence spans 262 residues: Nurim (262 aa).

Over 1–4 (MAPA) the chain is Nuclear. The chain crosses the membrane as a helical span at residues 5 to 28 (LLLVPAALASFILAFGTGVEFVRF). At 29–58 (TSLRPLLGGIPESGGPDARHGWLAALQDRS) the chain is on the perinuclear space side. The chain crosses the membrane as a helical span at residues 59–80 (ILASLAWDLCLLLLFVVQHSLM). At 81–97 (ATEAVKAWTSRYFGVLQ) the chain is on the nuclear side. Residues 98–114 (RSLYVACTALALQLVMR) traverse the membrane as a helical segment. Residues 115–133 (YWETTPRGPVLWEARAEPW) are Perinuclear space-facing. Residues 134–164 (ATWVPLLCFVLHVVSWLLIFSILLVFDYAEL) traverse the membrane as a helical segment. Topologically, residues 165 to 191 (MGLKQVYYHVLGLGEPLSLKSPRALRL) are nuclear. The helical transmembrane segment at 192–210 (FSHLRHPVCVELLTVLWVV) threads the bilayer. The Perinuclear space segment spans residues 211–216 (PTLGTD). Residues 217–234 (RLLLALLFTLYLGLAHGL) traverse the membrane as a helical segment. Residues 235 to 262 (DQQDLRYLRSQLQRKLHLLSRPQDGEAE) lie on the Nuclear side of the membrane.

Belongs to the nurim family.

The protein localises to the nucleus inner membrane. The polypeptide is Nurim (Nrm) (Mus musculus (Mouse)).